Consider the following 274-residue polypeptide: Syntaxin-12 (274 aa).

The segment at 1–20 (MSYGPLDMYRNPGPSGPQPR) is disordered. Residue Ser-2 is modified to N-acetylserine. Over 2 to 250 (SYGPLDMYRN…AYYQKKSRKK (249 aa)) the chain is Cytoplasmic. Positions 34–80 (QRISQATAQIKNLMSQLGTKQDSSKLQENLQQFQHSTNQLAKETNEL) form a coiled coil. Positions 128–150 (EKESIARARAGSRLSAEDRQREE) are disordered. Residues Ser-139, Ser-142, Ser-218, and Ser-225 each carry the phosphoserine modification. Positions 178 to 240 (LELIKERETA…ERASDQLQRA (63 aa)) constitute a t-SNARE coiled-coil homology domain. The helical; Anchor for type IV membrane protein transmembrane segment at 251-271 (MCILVLVLSVIVTVLVVVIWV) threads the bilayer. Residues 272-274 (ASK) lie on the Vesicular side of the membrane.

It belongs to the syntaxin family. As to quaternary structure, associates with the BLOC-1 complex. Interacts with BLOC1S6. Interacts with NAPA and SNAP23. Identified in a complex containing STX6, STX12, VAMP4 and VTI1A. Interacts with GRIPAP1. Forms a complex with GRIP1, GRIA2 and NSG1; controls the intracellular fate of AMPAR and the endosomal sorting of the GRIA2 subunit toward recycling and membrane targeting. Interacts with NSG1. Interacts with TPC1. Interacts (via N-terminus) with VPS13B. Ubiquitous. Highly expressed in brain.

The protein resides in the endosome membrane. It is found in the golgi apparatus membrane. The protein localises to the endomembrane system. It localises to the early endosome membrane. Its subcellular location is the recycling endosome membrane. Functionally, SNARE promoting fusion of transport vesicles with target membranes. Together with SNARE STX6, promotes movement of vesicles from endosomes to the cell membrane, and may therefore function in the endocytic recycling pathway. Through complex formation with GRIP1, GRIA2 and NSG1 controls the intracellular fate of AMPAR and the endosomal sorting of the GRIA2 subunit toward recycling and membrane targeting. This is Syntaxin-12 (Stx12) from Rattus norvegicus (Rat).